A 537-amino-acid chain; its full sequence is Formimidoyltransferase-cyclodeaminase (537 aa).

A formiminotransferase N-subdomain region spans residues Met1–Phe181. Residue His82 is the For formimidoyltransferase activity of the active site. Residue Gly163–Gly172 coordinates folate. Residues Leu182–Val326 form a formiminotransferase C-subdomain region. The tract at residues Gln327 to Pro335 is linker. The interval Leu336–Glu537 is cyclodeaminase/cyclohydrolase. Catalysis depends on Asp413, which acts as the For cyclodeaminase activity.

In the C-terminal section; belongs to the cyclodeaminase/cyclohydrolase family. The protein in the N-terminal section; belongs to the formiminotransferase family. Homooctamer, including four polyglutamate binding sites. The subunits are arranged as a tetramer of dimers, and form a planar ring-shaped structure.

It localises to the cytoplasm. It is found in the cytosol. Its subcellular location is the golgi apparatus. The protein localises to the cytoskeleton. The protein resides in the microtubule organizing center. It localises to the centrosome. It is found in the centriole. The enzyme catalyses 5-formimidoyltetrahydrofolate + L-glutamate = N-formimidoyl-L-glutamate + (6S)-5,6,7,8-tetrahydrofolate. It carries out the reaction 5-formimidoyltetrahydrofolate + 2 H(+) = (6R)-5,10-methenyltetrahydrofolate + NH4(+). It functions in the pathway amino-acid degradation; L-histidine degradation into L-glutamate; L-glutamate from N-formimidoyl-L-glutamate (transferase route): step 1/1. Functionally, folate-dependent enzyme, that displays both transferase and deaminase activity. Serves to channel one-carbon units from formiminoglutamate to the folate pool. This Dictyostelium discoideum (Social amoeba) protein is Formimidoyltransferase-cyclodeaminase (ftcd).